We begin with the raw amino-acid sequence, 305 residues long: tRNA pseudouridine synthase B (305 aa).

D39 functions as the Nucleophile in the catalytic mechanism.

It belongs to the pseudouridine synthase TruB family. Type 1 subfamily.

It catalyses the reaction uridine(55) in tRNA = pseudouridine(55) in tRNA. In terms of biological role, responsible for synthesis of pseudouridine from uracil-55 in the psi GC loop of transfer RNAs. This chain is tRNA pseudouridine synthase B, found in Staphylococcus aureus (strain Newman).